A 451-amino-acid polypeptide reads, in one-letter code: L-seryl-tRNA(Sec) selenium transferase (451 aa).

Residue Lys-286 is modified to N6-(pyridoxal phosphate)lysine.

This sequence belongs to the SelA family. Pyridoxal 5'-phosphate serves as cofactor.

The protein resides in the cytoplasm. It carries out the reaction L-seryl-tRNA(Sec) + selenophosphate + H(+) = L-selenocysteinyl-tRNA(Sec) + phosphate. It functions in the pathway aminoacyl-tRNA biosynthesis; selenocysteinyl-tRNA(Sec) biosynthesis; selenocysteinyl-tRNA(Sec) from L-seryl-tRNA(Sec) (bacterial route): step 1/1. Converts seryl-tRNA(Sec) to selenocysteinyl-tRNA(Sec) required for selenoprotein biosynthesis. This is L-seryl-tRNA(Sec) selenium transferase from Aliarcobacter butzleri (strain RM4018) (Arcobacter butzleri).